Reading from the N-terminus, the 246-residue chain is Acetoacetate decarboxylase (246 aa).

Catalysis depends on K116, which acts as the Schiff-base intermediate with acetoacetate.

The protein belongs to the ADC family.

It catalyses the reaction acetoacetate + H(+) = acetone + CO2. Catalyzes the conversion of acetoacetate to acetone and carbon dioxide. The chain is Acetoacetate decarboxylase from Burkholderia ambifaria (strain MC40-6).